Reading from the N-terminus, the 165-residue chain is Phosphopantetheine adenylyltransferase (165 aa).

A substrate-binding site is contributed by Ser-9. ATP is bound by residues 9–10 (SF) and His-17. 3 residues coordinate substrate: Lys-41, Ile-75, and Arg-89. ATP is bound by residues 90-92 (GVR), Glu-100, and 125-131 (YLFVRSD).

This sequence belongs to the bacterial CoaD family. As to quaternary structure, homohexamer. Mg(2+) serves as cofactor.

It is found in the cytoplasm. The catalysed reaction is (R)-4'-phosphopantetheine + ATP + H(+) = 3'-dephospho-CoA + diphosphate. The protein operates within cofactor biosynthesis; coenzyme A biosynthesis; CoA from (R)-pantothenate: step 4/5. Its function is as follows. Reversibly transfers an adenylyl group from ATP to 4'-phosphopantetheine, yielding dephospho-CoA (dPCoA) and pyrophosphate. The protein is Phosphopantetheine adenylyltransferase of Borrelia hermsii (strain HS1 / DAH).